A 142-amino-acid chain; its full sequence is Large ribosomal subunit protein uL13 (142 aa).

This sequence belongs to the universal ribosomal protein uL13 family. As to quaternary structure, part of the 50S ribosomal subunit.

Its function is as follows. This protein is one of the early assembly proteins of the 50S ribosomal subunit, although it is not seen to bind rRNA by itself. It is important during the early stages of 50S assembly. The polypeptide is Large ribosomal subunit protein uL13 (Burkholderia pseudomallei (strain 1106a)).